We begin with the raw amino-acid sequence, 132 residues long: MSLSDPLGDMLTRIRNAYGRKKSSVSTPASRLRTRVLDVLKAEGYIRDYSQTDFDNGKSEIEIELKYFDGAPVVREIARVSKPGRRVYVSAKSIPHVANGLGIAILSTPKGVMADHEAREQNVGGEILCQIF.

The protein belongs to the universal ribosomal protein uS8 family. As to quaternary structure, part of the 30S ribosomal subunit. Contacts proteins S5 and S12.

One of the primary rRNA binding proteins, it binds directly to 16S rRNA central domain where it helps coordinate assembly of the platform of the 30S subunit. This Mesorhizobium japonicum (strain LMG 29417 / CECT 9101 / MAFF 303099) (Mesorhizobium loti (strain MAFF 303099)) protein is Small ribosomal subunit protein uS8.